A 98-amino-acid chain; its full sequence is Small ribosomal subunit protein uS19 (98 aa).

Residues 77-98 (TRTYRGHAGGKAEKGGSAPKRK) are disordered.

It belongs to the universal ribosomal protein uS19 family.

Its function is as follows. Protein S19 forms a complex with S13 that binds strongly to the 16S ribosomal RNA. This Prosthecochloris aestuarii (strain DSM 271 / SK 413) protein is Small ribosomal subunit protein uS19.